A 390-amino-acid chain; its full sequence is MVNTSLLAALTAYAVAVSAAPTAPQVKGFSVNQVAVPKGVYRHPAAQLAKAYGKYHATVPTQVAAAAAATGSVTTNPTSNDEEYITQVTVGDDTLGLDFDTGSADLWVFSSQTPSSERSGHDYYTPGSSAQKIDGATWSISYGDGSSASGDVYKDKVTVGGVSYDSQAVESAEKVSSEFTQDTANDGLLGLAFSSINTVQPTPQKTFFDNVKSSLSEPIFAVALKHNAPGVYDFGYTDSSKYTGSITYTDVDNSQGFWGFTADGYSIGSDSSSDSITGIADTGTTLLLLDDSIVDAYYEQVNGASYDSSQGGYVFPSSASLPDFSVTIGDYTATVPGEYISFADVGNGQTFGGIQSNSGIGFSIFGDVFLKSQYVVFDASGPRLGFAAQA.

A signal peptide spans 1 to 19 (MVNTSLLAALTAYAVAVSA). The propeptide at 20-67 (APTAPQVKGFSVNQVAVPKGVYRHPAAQLAKAYGKYHATVPTQVAAAA) is activation peptide. O-linked (Man...) threonine glycosylation occurs at T70. In terms of domain architecture, Peptidase A1 spans 84 to 387 (YITQVTVGDD…DASGPRLGFA (304 aa)). Active-site residues include D100 and D281.

Belongs to the peptidase A1 family.

It is found in the secreted. The catalysed reaction is Hydrolysis of proteins with broad specificity. Generally favors hydrophobic residues in P1 and P1', but also accepts Lys in P1, which leads to activation of trypsinogen. Does not clot milk.. Its activity is regulated as follows. Inhibited by the microbial peptide pepstatin. In terms of biological role, secreted aspartic endopeptidase that allows assimilation of proteinaceous substrates. The scissile peptide bond is attacked by a nucleophilic water molecule activated by two aspartic residues in the active site. Shows a broad primary substrate specificity. Favors hydrophobic residues at the P1 and P1' positions, but also accepts a lysine residue in the P1 position, leading to the activation of trypsinogen and chymotrypsinogen A. This Aspergillus oryzae (Yellow koji mold) protein is Aspergillopepsin-1 (pepA).